We begin with the raw amino-acid sequence, 439 residues long: Lipase 1 (439 aa).

The N-terminal stretch at 1 to 24 is a signal peptide; the sequence is MRCSLRMQLLLLLGLCVFISRIQG. The segment at 28–60 is disordered; sequence GGEEDEEDEEEEEEEEESVEDETPEDRLQRKNI. The segment covering 29–51 has biased composition (acidic residues); that stretch reads GEEDEEDEEEEEEEEESVEDETP. N-linked (GlcNAc...) asparagine glycosylation is found at Asn-124 and Asn-151. The active-site Charge relay system is the Ser-197. 2 N-linked (GlcNAc...) asparagine glycosylation sites follow: Asn-346 and Asn-379. The active-site Charge relay system is the His-393. A glycan (N-linked (GlcNAc...) asparagine) is linked at Asn-426.

It belongs to the AB hydrolase superfamily. Lipase family. As to expression, in 14 hours embryos expression is seen in the foregut/midgut boundary.

The protein localises to the secreted. In terms of biological role, could be a digestive enzyme. This chain is Lipase 1 (Lip1), found in Drosophila melanogaster (Fruit fly).